Here is a 140-residue protein sequence, read N- to C-terminus: Transcription antitermination protein NusB (140 aa).

It belongs to the NusB family.

Functionally, involved in transcription antitermination. Required for transcription of ribosomal RNA (rRNA) genes. Binds specifically to the boxA antiterminator sequence of the ribosomal RNA (rrn) operons. The sequence is that of Transcription antitermination protein NusB from Sorangium cellulosum (strain So ce56) (Polyangium cellulosum (strain So ce56)).